A 482-amino-acid polypeptide reads, in one-letter code: Docking protein 1 (482 aa).

Methionine 1 carries the post-translational modification N-acetylmethionine. Residues 4–119 (AVMEGPLFLQ…WVQTLCRTAF (116 aa)) enclose the PH domain. The residue at position 48 (serine 48) is a Phosphoserine. The 109-residue stretch at 151–259 (EGSQFWVTSQ…QQQKAQGKVG (109 aa)) folds into the IRS-type PTB domain. Phosphoserine is present on residues serine 269 and serine 290. The disordered stretch occupies residues 269–328 (SHDGETEGKTVPPPVPQDPLGSPPALYAEPLDSLRIPPGPSQDSVYSDPLGSTPAGAGEG). Residues tyrosine 295, tyrosine 336, tyrosine 340, tyrosine 361, and tyrosine 376 each carry the phosphotyrosine modification. The segment at 353–373 (TDSKEDPIYDEPEGLAPAPPR) is disordered. Tyrosine 397 is modified (phosphotyrosine; by INSR). The segment at 398-482 (ELPYNPATDD…RAGVKSEGST (85 aa)) is disordered. Tyrosine 408 is subject to Phosphotyrosine. Positions 410 to 423 (VPPPRSPKPAPAPK) are enriched in pro residues. A Phosphoserine modification is found at serine 415. Polar residues predominate over residues 432-459 (SGTTRGSGSKGFSSDTALYSQVQKSGTS). Tyrosine 450 is modified (phosphotyrosine).

This sequence belongs to the DOK family. Type A subfamily. In terms of assembly, interacts with RasGAP, INPP5D/SHIP1 and ABL1. Interacts directly with phosphorylated ITGB3. Interacts with SRMS (via the SH2 and SH3 domains). Constitutively tyrosine-phosphorylated. Phosphorylated by TEC. Phosphorylated on tyrosine residues by the insulin receptor kinase. Results in the negative regulation of the insulin signaling pathway. Phosphorylated by LYN. Phosphorylated on tyrosine residues by SRMS. Expressed in lung, spleen, skeletal muscle and kidney.

Its subcellular location is the cytoplasm. The protein localises to the nucleus. Functionally, DOK proteins are enzymatically inert adaptor or scaffolding proteins. They provide a docking platform for the assembly of multimolecular signaling complexes. DOK1 appears to be a negative regulator of the insulin signaling pathway. Modulates integrin activation by competing with talin for the same binding site on ITGB3. In Mus musculus (Mouse), this protein is Docking protein 1 (Dok1).